A 3431-amino-acid polypeptide reads, in one-letter code: KICSTOR complex protein SZT2 (3431 aa).

Disordered regions lie at residues 699-731 (SKEP…PQQA), 1067-1101 (LRDP…TLPS), and 1162-1231 (KPKL…GADG). Residues 1082 to 1188 (VAKDRAGNST…ATGTKATESQ (107 aa)) are mediates interaction with the GATOR1 complex. 2 stretches are compositionally biased toward polar residues: residues 1088–1101 (GNST…TLPS) and 1182–1212 (TKAT…TPSC). Ser-1275 is subject to Phosphoserine. Residues 1356–1378 (PPSPGPLSPGPFSSSIEEGPEPR) form a disordered region. Ser-1415 is modified (phosphoserine). 7 disordered regions span residues 1512-1534 (YRES…SDAD), 1629-1678 (PPAS…HPGL), 1806-1883 (RAED…PGET), 2113-2148 (PPSL…SDAV), 2450-2512 (TEAG…LEEG), 2735-2756 (ASPP…GGPL), and 2866-2899 (ETCA…DVPP). The residue at position 1640 (Thr-1640) is a Phosphothreonine. A compositionally biased stretch (polar residues) spans 1641 to 1657 (SESSASFPRSPGQPSSL). Residue Ser-1650 is modified to Phosphoserine. Positions 1832 to 1854 (PLISLPSLSQGGSQPGPSRGLSL) are enriched in low complexity. The segment covering 2118–2129 (LSRSQEPISSED) has biased composition (polar residues). Basic and acidic residues predominate over residues 2460 to 2473 (TTDDIVLDRPEDTR). Over residues 2739 to 2749 (LSREQGRLSGS) the composition is skewed to low complexity.

As to quaternary structure, part of the KICSTOR complex composed of KPTN, ITFG2, KICS2 and SZT2. SZT2 probably serves as a link between the other three proteins in the KICSTOR complex and may mediate the direct interaction with the GATOR complex via GATOR1. The KICSTOR complex interacts directly with the GATOR1 complex and most probably indirectly with the GATOR2 complex in an amino acid-independent manner. As to expression, mostly expressed in brain, spinal cord and lung.

The protein resides in the lysosome membrane. It is found in the peroxisome. In terms of biological role, as part of the KICSTOR complex functions in the amino acid-sensing branch of the TORC1 signaling pathway. Recruits, in an amino acid-independent manner, the GATOR1 complex to the lysosomal membranes and allows its interaction with GATOR2 and the RAG GTPases. Functions upstream of the RAG GTPases and is required to negatively regulate mTORC1 signaling in absence of amino acids. In absence of the KICSTOR complex mTORC1 is constitutively localized to the lysosome and activated. The KICSTOR complex is also probably involved in the regulation of mTORC1 by glucose. May play a role in the cellular response to oxidative stress. This chain is KICSTOR complex protein SZT2, found in Mus musculus (Mouse).